Reading from the N-terminus, the 404-residue chain is Glutamate-pyruvate aminotransferase AlaA (404 aa).

Positions 41 and 179 each coordinate L-alanine. Lys240 bears the N6-(pyridoxal phosphate)lysine mark. Residue Arg378 participates in L-alanine binding.

Belongs to the class-I pyridoxal-phosphate-dependent aminotransferase family. Homodimer. Pyridoxal 5'-phosphate serves as cofactor.

The catalysed reaction is L-alanine + 2-oxoglutarate = pyruvate + L-glutamate. It functions in the pathway amino-acid biosynthesis; L-alanine biosynthesis. Functionally, involved in the biosynthesis of alanine. Catalyzes the transamination of pyruvate by glutamate, leading to the formation of L-alanine and 2-oxoglutarate. Is also able to catalyze the reverse reaction. In Haemophilus influenzae (strain ATCC 51907 / DSM 11121 / KW20 / Rd), this protein is Glutamate-pyruvate aminotransferase AlaA (alaA).